The chain runs to 202 residues: V-type proton ATPase subunit E (202 aa).

The protein belongs to the V-ATPase E subunit family.

In terms of biological role, produces ATP from ADP in the presence of a proton gradient across the membrane. The sequence is that of V-type proton ATPase subunit E from Halothermothrix orenii (strain H 168 / OCM 544 / DSM 9562).